We begin with the raw amino-acid sequence, 288 residues long: Quinate/shikimate dehydrogenase (288 aa).

Residues lysine 71 and aspartate 107 each contribute to the substrate site. NAD(+) is bound by residues 132-135 (AGGA), 155-158 (NRRD), lysine 205, 232-235 (CVYN), and glycine 255.

The protein belongs to the shikimate dehydrogenase family. As to quaternary structure, homodimer.

It carries out the reaction L-quinate + NAD(+) = 3-dehydroquinate + NADH + H(+). The enzyme catalyses L-quinate + NADP(+) = 3-dehydroquinate + NADPH + H(+). The catalysed reaction is shikimate + NADP(+) = 3-dehydroshikimate + NADPH + H(+). It catalyses the reaction shikimate + NAD(+) = 3-dehydroshikimate + NADH + H(+). Its pathway is metabolic intermediate biosynthesis; chorismate biosynthesis; chorismate from D-erythrose 4-phosphate and phosphoenolpyruvate: step 4/7. Its function is as follows. The actual biological function of YdiB remains unclear, nor is it known whether 3-dehydroshikimate or quinate represents the natural substrate. Catalyzes the reversible NAD-dependent reduction of both 3-dehydroshikimate (DHSA) and 3-dehydroquinate to yield shikimate (SA) and quinate, respectively. It can use both NAD or NADP for catalysis, however it has higher catalytic efficiency with NAD. This Escherichia coli O81 (strain ED1a) protein is Quinate/shikimate dehydrogenase.